We begin with the raw amino-acid sequence, 502 residues long: Lysine--tRNA ligase (502 aa).

Mg(2+) contacts are provided by Glu411 and Glu418.

Belongs to the class-II aminoacyl-tRNA synthetase family. As to quaternary structure, homodimer. Requires Mg(2+) as cofactor.

The protein resides in the cytoplasm. The catalysed reaction is tRNA(Lys) + L-lysine + ATP = L-lysyl-tRNA(Lys) + AMP + diphosphate. The sequence is that of Lysine--tRNA ligase from Clostridium kluyveri (strain ATCC 8527 / DSM 555 / NBRC 12016 / NCIMB 10680 / K1).